The sequence spans 460 residues: Putative movement protein (460 aa).

Disordered regions lie at residues 267–314 (SGSK…SDFE) and 349–460 (RQNQ…PSGL). Over residues 368–379 (RKSKGISGRRKQ) the composition is skewed to basic residues.

This sequence belongs to the tobamoviruses movement protein family.

Functionally, suppressor of viral-induced RNA silencing. The protein is Putative movement protein of Crataegus (hawthorn).